The chain runs to 286 residues: Glycine--tRNA ligase alpha subunit (286 aa).

The protein belongs to the class-II aminoacyl-tRNA synthetase family. As to quaternary structure, tetramer of two alpha and two beta subunits.

It is found in the cytoplasm. The enzyme catalyses tRNA(Gly) + glycine + ATP = glycyl-tRNA(Gly) + AMP + diphosphate. This is Glycine--tRNA ligase alpha subunit from Thermotoga neapolitana (strain ATCC 49049 / DSM 4359 / NBRC 107923 / NS-E).